The following is a 31-amino-acid chain: Cytochrome b6-f complex subunit 6 (31 aa).

Residues 4-26 (LTSYFGFLLAALTITSALFIGLS) form a helical membrane-spanning segment.

The protein belongs to the PetL family. The 4 large subunits of the cytochrome b6-f complex are cytochrome b6, subunit IV (17 kDa polypeptide, PetD), cytochrome f and the Rieske protein, while the 4 small subunits are PetG, PetL, PetM and PetN. The complex functions as a dimer.

The protein localises to the plastid. Its subcellular location is the chloroplast thylakoid membrane. Component of the cytochrome b6-f complex, which mediates electron transfer between photosystem II (PSII) and photosystem I (PSI), cyclic electron flow around PSI, and state transitions. PetL is important for photoautotrophic growth as well as for electron transfer efficiency and stability of the cytochrome b6-f complex. This is Cytochrome b6-f complex subunit 6 from Aethionema grandiflorum (Persian stone-cress).